The primary structure comprises 665 residues: Transketolase (665 aa).

His26 lines the substrate pocket. Residues His66 and 114–116 (GPL) each bind thiamine diphosphate. Mg(2+) is bound at residue Asp155. Thiamine diphosphate contacts are provided by Gly156 and Asn185. Residues Asn185 and Ile187 each coordinate Mg(2+). Residues His261, Arg358, and Ser385 each coordinate substrate. His261 is a binding site for thiamine diphosphate. The active-site Proton donor is the Glu411. Residue Phe437 coordinates thiamine diphosphate. Positions 461, 469, and 520 each coordinate substrate.

This sequence belongs to the transketolase family. Homodimer. It depends on Mg(2+) as a cofactor. Ca(2+) serves as cofactor. Requires Mn(2+) as cofactor. The cofactor is Co(2+). Thiamine diphosphate is required as a cofactor.

It carries out the reaction D-sedoheptulose 7-phosphate + D-glyceraldehyde 3-phosphate = aldehydo-D-ribose 5-phosphate + D-xylulose 5-phosphate. Its function is as follows. Catalyzes the transfer of a two-carbon ketol group from a ketose donor to an aldose acceptor, via a covalent intermediate with the cofactor thiamine pyrophosphate. In Buchnera aphidicola subsp. Schizaphis graminum (strain Sg), this protein is Transketolase (tkt).